The chain runs to 505 residues: Kelch-like protein 42 (505 aa).

The 74-residue stretch at 5-78 folds into the BTB domain; sequence EMVQIRLEDR…INAGGAREGW (74 aa). At Ser43 the chain carries Phosphoserine. 6 Kelch repeats span residues 176 to 234, 235 to 282, 284 to 325, 327 to 372, 374 to 429, and 431 to 480; these read PGDV…PLAN, NLPP…NEWL, VASM…DAWN, VAPL…DMWT, FETC…RQWL, and LKEN…DSWE.

Component of the BCR(KLHL42) E3 ubiquitin ligase complex, at least composed of CUL3 and KLHL42. Interacts (via the BTB domain) with CUL3. Interacts (via the kelch domains) with KATNA1.

It is found in the cytoplasm. The protein localises to the cytoskeleton. Its subcellular location is the spindle. It participates in protein modification; protein ubiquitination. Functionally, substrate-specific adapter of a BCR (BTB-CUL3-RBX1) E3 ubiquitin-protein ligase complex required for mitotic progression and cytokinesis. The BCR(KLHL42) E3 ubiquitin ligase complex mediates the ubiquitination and subsequent degradation of KATNA1. Involved in microtubule dynamics throughout mitosis. The chain is Kelch-like protein 42 (KLHL42) from Homo sapiens (Human).